Reading from the N-terminus, the 302-residue chain is uncharacterized protein (302 aa).

Residues glutamine 19 to asparagine 90 enclose the S4 RNA-binding domain. Aspartate 138 is a catalytic residue. Residues lysine 182–glycine 205 are disordered.

Belongs to the pseudouridine synthase RluA family.

It catalyses the reaction a uridine in RNA = a pseudouridine in RNA. This is an uncharacterized protein from Bacillus subtilis (strain 168).